The chain runs to 78 residues: Acyl carrier protein (78 aa).

A Carrier domain is found at 2–77 (STIEERVKKI…AAIDYINGHQ (76 aa)). Serine 37 is modified (O-(pantetheine 4'-phosphoryl)serine).

This sequence belongs to the acyl carrier protein (ACP) family. Post-translationally, 4'-phosphopantetheine is transferred from CoA to a specific serine of apo-ACP by AcpS. This modification is essential for activity because fatty acids are bound in thioester linkage to the sulfhydryl of the prosthetic group.

Its subcellular location is the cytoplasm. It functions in the pathway lipid metabolism; fatty acid biosynthesis. Carrier of the growing fatty acid chain in fatty acid biosynthesis. The polypeptide is Acyl carrier protein (Erwinia tasmaniensis (strain DSM 17950 / CFBP 7177 / CIP 109463 / NCPPB 4357 / Et1/99)).